A 142-amino-acid polypeptide reads, in one-letter code: Large ribosomal subunit protein uL11 (142 aa).

The protein belongs to the universal ribosomal protein uL11 family. Part of the ribosomal stalk of the 50S ribosomal subunit. Interacts with L10 and the large rRNA to form the base of the stalk. L10 forms an elongated spine to which L12 dimers bind in a sequential fashion forming a multimeric L10(L12)X complex. One or more lysine residues are methylated.

In terms of biological role, forms part of the ribosomal stalk which helps the ribosome interact with GTP-bound translation factors. This Glaesserella parasuis serovar 5 (strain SH0165) (Haemophilus parasuis) protein is Large ribosomal subunit protein uL11.